The primary structure comprises 331 residues: Ferredoxin--NADP reductase (331 aa).

T14, E33, Q41, Y46, V86, F120, D284, and S327 together coordinate FAD.

Belongs to the ferredoxin--NADP reductase type 2 family. Homodimer. The cofactor is FAD.

It catalyses the reaction 2 reduced [2Fe-2S]-[ferredoxin] + NADP(+) + H(+) = 2 oxidized [2Fe-2S]-[ferredoxin] + NADPH. This Picrophilus torridus (strain ATCC 700027 / DSM 9790 / JCM 10055 / NBRC 100828 / KAW 2/3) protein is Ferredoxin--NADP reductase.